Reading from the N-terminus, the 1001-residue chain is RNA-binding protein 12B (1001 aa).

S98, S101, and S112 each carry phosphoserine. Residue K114 forms a Glycyl lysine isopeptide (Lys-Gly) (interchain with G-Cter in SUMO2) linkage. The segment covering 119 to 128 has biased composition (polar residues); that stretch reads NSGYGSSINQ. Residues 119-147 form a disordered region; it reads NSGYGSSINQDAGFHTNGTGHGNLRPRKT. Residue K151 forms a Glycyl lysine isopeptide (Lys-Gly) (interchain with G-Cter in SUMO2) linkage. An RRM 1 domain is found at 155 to 230; the sequence is PYLFLRGLPY…RFIEVMQGSE (76 aa). The segment covering 247–262 has biased composition (basic and acidic residues); it reads LRRSEEHSPPRGINDR. Positions 247–278 are disordered; that stretch reads LRRSEEHSPPRGINDRHFRKRSHSKSPRRTRS. Phosphoserine is present on residues S250 and S254. The segment covering 263-278 has biased composition (basic residues); the sequence is HFRKRSHSKSPRRTRS. The residue at position 276 (T276) is a Phosphothreonine. S278, S280, S292, and S294 each carry phosphoserine. An RRM 2 domain is found at 284–360; sequence FYVHLKNLSL…RPVHIDPISR (77 aa). An N6-acetyllysine modification is found at K319. Residue K335 forms a Glycyl lysine isopeptide (Lys-Gly) (interchain with G-Cter in SUMO2) linkage. The residue at position 377 (S377) is a Phosphoserine. The region spanning 400–477 is the RRM 3 domain; sequence LCIYIRNFPF…TEVLLRLISE (78 aa). Residues K514 and K541 each participate in a glycyl lysine isopeptide (Lys-Gly) (interchain with G-Cter in SUMO2) cross-link. The interval 544–587 is disordered; it reads QRDFRQPDRHPPEDFRHSSEDFRFPPEDFRHSPEDFRRPREEDF. 3 positions are modified to phosphoserine: S575, S591, and S638. Positions 631–881 are enriched in basic and acidic residues; the sequence is LEEDFRRSPT…FRSPPDDFRS (251 aa). The segment at 631–882 is disordered; the sequence is LEEDFRRSPT…RSPPDDFRSH (252 aa). A Phosphothreonine modification is found at T640. Phosphoserine is present on residues S710 and S718. K895 is covalently cross-linked (Glycyl lysine isopeptide (Lys-Gly) (interchain with G-Cter in SUMO2)). Residues 925–1001 form the RRM 4 domain; sequence TPIKIMNLPF…GPRKVKLTLL (77 aa).

The chain is RNA-binding protein 12B (RBM12B) from Homo sapiens (Human).